The following is a 235-amino-acid chain: Bypass of stop codon protein 2 (235 aa).

The helical transmembrane segment at 68–88 (FGIFQLMCSLGVIVLLLPIII) threads the bilayer. The residue at position 177 (serine 177) is a Phosphoserine.

Its subcellular location is the lipid droplet. The protein resides in the membrane. The sequence is that of Bypass of stop codon protein 2 (BSC2) from Saccharomyces cerevisiae (strain ATCC 204508 / S288c) (Baker's yeast).